The chain runs to 231 residues: MKMLILAVSCLLAITGSLAADTCYNDVALDCGITSNSLALPRCNAVYGEYGSHGNVATELQAYAKLHLERSYDYLLSAAYFNNYQTNRAGFSKLFKKLSDEAWSKTIDIIKHVTKRGDKMNFDQHSTMKTERKNYTAENHELEALAKALDTQKELAERAFYIHREATRNSQHLHDPEIAQYLEEEFIEDHAEKIRTLAGHTSDLKKFITANNGHDLSLALYVFDEYLQKTV.

A signal peptide spans 1–19; that stretch reads MKMLILAVSCLLAITGSLA. C23 and C43 are oxidised to a cystine. Positions 50–208 constitute a Ferritin-like diiron domain; sequence YGSHGNVATE…GHTSDLKKFI (159 aa). A glycan (N-linked (GlcNAc...) asparagine) is linked at N134.

Belongs to the ferritin family. As to quaternary structure, oligomer of 12 light (L) chains and 12 heavy (H) chains; L and H chains are disulfide-linked. The functional molecule forms a roughly spherical shell with a diameter of 12 nm and contains a central cavity into which the insoluble ferric iron core is deposited.

The protein resides in the golgi apparatus. It is found in the secreted. In terms of biological role, stores iron in a soluble, non-toxic, readily available form. Important for iron homeostasis. Iron is taken up in the ferrous form and deposited as ferric hydroxides after oxidation. Ferritin is composed of a heavy (H) chain which is responsible for the oxidation and uptake of ferrous iron, and a light (L) chain which facilitates the nucleation of the ferrihydrite iron core. This Trichoplusia ni (Cabbage looper) protein is Ferritin light chain.